The sequence spans 205 residues: MGNMDGKTVEELSATEIHRWYKKFMTECPSGQLTQHEFKQFFGLKNLSPASNQYIEQMFDTFDFNKDGYMDFMEYVAALSLVLKGKVEQKLRWYFKLYDVDGNGCIDRGELLNIIKAIRAINRCNDEMTAEEFTDMVFDKIDINGDGELSLEEFIEGVQKDELLLEVLTRSLDLKHIVYMIQNDGKRMEISERPRQEITTGNSLP.

Gly2 carries N-myristoyl glycine lipidation. Asn3 bears the Deamidated asparagine mark. EF-hand domains are found at residues 30–48 (SGQLTQHEFKQFFGLKNLS), 50–85 (ASNQYIEQMFDTFDFNKDGYMDFMEYVAALSLVLKG), 86–121 (KVEQKLRWYFKLYDVDGNGCIDRGELLNIIKAIRAI), and 129–164 (TAEEFTDMVFDKIDINGDGELSLEEFIEGVQKDELL). Ca(2+) contacts are provided by Asp63, Asn65, Asp67, Tyr69, Glu74, Asp99, Asp101, Asn103, Cys105, Glu110, Asp142, Asn144, Asp146, Glu148, and Glu153.

As to expression, retina.

In terms of biological role, regulatory protein that inhibits guanylyl cyclase when free calcium ions concentration is elevated. This Ca(2+)-sensitive regulation of retinal guanylyl cyclase is a key event in recovery of the dark state of rod photoreceptors following light exposure. The chain is Guanylyl cyclase-activating protein 1 (GUCA1A) from Lithobates pipiens (Northern leopard frog).